The chain runs to 508 residues: Hydroxymethylglutaryl-CoA synthase, mitochondrial (508 aa).

A mitochondrion-targeting transit peptide spans 1–37 (MQRLLTPVKRILQLTRAVQETSLTPARLLPVAHQRFS). Lys52 carries the N6-succinyllysine modification. Positions 80 and 81 each coordinate (3S)-3-hydroxy-3-methylglutaryl-CoA. Lys83 bears the N6-acetyllysine; alternate mark. Lys83 carries the post-translational modification N6-succinyllysine; alternate. Glu132 functions as the Proton donor/acceptor in the catalytic mechanism. Positions 166, 204, and 208 each coordinate (3S)-3-hydroxy-3-methylglutaryl-CoA. Residue Cys166 is the Acyl-thioester intermediate of the active site. Position 221 is an N6-succinyllysine (Lys221). Lys243 is modified (N6-acetyllysine). N6-acetyllysine; alternate is present on Lys256. Lys256 carries the N6-succinyllysine; alternate modification. Positions 258 and 301 each coordinate (3S)-3-hydroxy-3-methylglutaryl-CoA. Catalysis depends on His301, which acts as the Proton donor/acceptor. The residue at position 306 (Lys306) is an N6-acetyllysine. Position 310 (Lys310) interacts with (3S)-3-hydroxy-3-methylglutaryl-CoA. Lys310 is modified (N6-acetyllysine; alternate). Residue Lys310 is modified to N6-succinyllysine; alternate. At Lys333 the chain carries N6-succinyllysine. N6-acetyllysine; alternate is present on residues Lys342, Lys350, Lys354, and Lys358. N6-succinyllysine; alternate occurs at positions 342, 350, 354, and 358. Positions 380 and 414 each coordinate (3S)-3-hydroxy-3-methylglutaryl-CoA. At Ser433 the chain carries Phosphoserine. Residue Lys437 is modified to N6-acetyllysine. A Phosphoserine modification is found at Ser440. Lys447 is modified (N6-acetyllysine; alternate). Position 447 is an N6-succinyllysine; alternate (Lys447). The residue at position 456 (Ser456) is a Phosphoserine. Residue Lys473 is modified to N6-acetyllysine; alternate. Lys473 carries the post-translational modification N6-succinyllysine; alternate. The residue at position 477 (Ser477) is a Phosphoserine.

Belongs to the thiolase-like superfamily. HMG-CoA synthase family. In terms of assembly, homodimer. In terms of processing, succinylated. Desuccinylated by SIRT5. Succinylation, at least at Lys-83 and Lys-310, inhibits the enzymatic activity. Expression in liver is 200-fold higher than in any other tissue. Low expression in colon, kidney, testis, and pancreas. Very low expression in heart and skeletal muscle. Not detected in brain. In terms of tissue distribution, highest expression detected in heart and skeletal muscle.

The protein resides in the mitochondrion. It catalyses the reaction acetoacetyl-CoA + acetyl-CoA + H2O = (3S)-3-hydroxy-3-methylglutaryl-CoA + CoA + H(+). It functions in the pathway metabolic intermediate biosynthesis; (R)-mevalonate biosynthesis; (R)-mevalonate from acetyl-CoA: step 2/3. In terms of biological role, catalyzes the first irreversible step in ketogenesis, condensing acetyl-CoA to acetoacetyl-CoA to form HMG-CoA, which is converted by HMG-CoA reductase (HMGCR) into mevalonate. This chain is Hydroxymethylglutaryl-CoA synthase, mitochondrial (HMGCS2), found in Homo sapiens (Human).